Here is a 509-residue protein sequence, read N- to C-terminus: Coiled-coil domain-containing protein 181 (509 aa).

Disordered regions lie at residues 1–122 (MDED…EDEE) and 237–369 (FLPP…EKKK). 2 stretches are compositionally biased toward basic and acidic residues: residues 22-33 (DLEWLINDKEKS) and 41-56 (ACKKEDDLDQVLKENE). The span at 60–69 (ELGQQLSDPD) shows a compositional bias: polar residues. Composition is skewed to basic and acidic residues over residues 70–82 (NSPKDEALPRRND) and 266–275 (IKKEESEAKG). The span at 319 to 333 (RIQSAGVSPVTSTYC) shows a compositional bias: polar residues. Coiled coils occupy residues 335–377 (SPRQ…VFKA) and 418–488 (LKKK…RSKQ). Residues 337–369 (RQKELQKQLERKREKLKREEEQRKLEEENEKKK) show a composition bias toward basic and acidic residues.

Belongs to the CCDC181 family. As to quaternary structure, homodimer. Interacts with HOOK1. Interacts with HOOK2. Interacts with HOOK3. In terms of tissue distribution, predominantly expressed in testis. Expressed at lower level in brain, eye, trachea and lung. Barely expressed in tongue, heart, liver, kidney, spleen and muscle. Present at high level in elongating spermatids, whereas lower levels are observed in round spermatids (at protein level).

The protein localises to the cytoplasm. It localises to the cytoskeleton. It is found in the cell projection. Its subcellular location is the cilium. The protein resides in the flagellum. Functionally, microtubule-binding protein that localizes to the microtubular manchette of elongating spermatids. This chain is Coiled-coil domain-containing protein 181, found in Mus musculus (Mouse).